Here is a 1072-residue protein sequence, read N- to C-terminus: MTYVTYLHKPSSIRNAVFCKFVNASSWNVIVAKVNCLEVYSYENNRLCLITSANIFAKIVNVKAFKPVSSPTDHIIVATDSFRYFTLFWDANDNTVSNGIKIQDCSERSLRESQSGPLLLVDPFQRVICLHVYQGLLTIIPIFKSKKRFMTSHNNPSLHDNFSVRIQELNVVDIAMLYNSSRPSLAVLYKDSKSIVHLSTYKINVREQEIDEDDVVCHDIEEGKLIPSENGGVFVFGEMYVYYISKDIQVSKLLLTYPITAFSPSISNDPETGLDSSIYIVADESGMLYKFKALFTDETVSMELEKLGESSIASCLIALPDNHLFVGSHFNNSVLLQLPSITKNNHKLEILQNFVNIAPISDFIIDDDQTGSSIITCSGAYKDGTLRIIRNSINIENVALIEMEGIKDFFSVSFRANYDNYIFLSLICETRAIIVSPEGVFSANHDLSCEESTIFVSTIYGNSQILQITTKEIRLFDGKKLHSWISPMSITCGSSFADNVCVAVAGGLILFFEGITEVGRYQCDTEVSSLCFTEENVVYVGLWSADIIMLTYCQDGISLTHSLKLTDIPRSIVYSQKYGDDGGTLYVSTNNGYVLMFNFQNGQVIEHSLRRNQLGVAPIILKHFDSKEKNAIFALGEKPQLMYYESDKLVITPLSCTEMLNISSYVNPSLGVNMLYCTNSYISLAKMSEIRSLNVQTVSVKGFPRRICSNSLFYFVLCMQLEESIGTQEQRLLSFLRVYEKNTLSEIAHHKFNEYEMVESIILMNDDKRVVVGTGFNFPDQDAPDSGRLMVFEMTSDNNIEMQAEHKVQGSVNTLVLYKHLIVAGINASVCIFEYEHGTMHVRNSIRTPTYTIDISVNQDEIIAADLMKSITVLQFIDDQLIEVARDYHPLWATSVEILSERKYFVTEADGNAVILLRDNVSPQLSDRKKLRWYKKFYLGELINKTRHCTFIEPQDKSLVTPQLLCATVDGSLMIVGDAGMSNTPLLLQLQDNIRKVIPSFGGLSHKEWKEYRGENETSPSDLIDGSLIESILGLREPILNEIVNGGHEGTKLDISVQDLKSIIENLEKLHP.

It belongs to the DDB1 family. Interacts with csn1, csn2, cdt2, ckn1, iqw1 and wdr21.

It is found in the nucleus. Its pathway is protein modification; protein ubiquitination. Functionally, component of an E3 ubiquitin-protein ligase that includes cul4. Required for ubiquitination and the subsequent degradation of the DNA replication licensing factor cdt1 and of the ribonucleotide reductase inhibitor spd1. Also required for transcription-coupled nucleotide excision repair. In Schizosaccharomyces pombe (strain 972 / ATCC 24843) (Fission yeast), this protein is DNA damage-binding protein 1 (ddb1).